The following is a 190-amino-acid chain: MGDAIDLSGDGGVLKKIVRSAKPDAISPSDDLPVVDVHYEGILAEDEKVFDTTREDNLVFSFELGTGSVIRSWDIALKTMKVGEVAKITCKPEYAYGRAGSPPDIPPDATLIFEVELVACRPRKGASVGSVSEERARLEDLKKQREIAAAAKEDDKKKREEAKAAAAARIQAKLDAKKGPGKGKGKGKAK.

Gly2 carries the N-acetylglycine modification. Residues 32–121 (LPVVDVHYEG…IFEVELVACR (90 aa)) form the PPIase FKBP-type domain. Residues 149–163 (AAAKEDDKKKREEAK) show a composition bias toward basic and acidic residues. A disordered region spans residues 149-190 (AAAKEDDKKKREEAKAAAAARIQAKLDAKKGPGKGKGKGKAK). Residues 179–190 (GPGKGKGKGKAK) show a composition bias toward basic residues.

It belongs to the FKBP-type PPIase family.

The enzyme catalyses [protein]-peptidylproline (omega=180) = [protein]-peptidylproline (omega=0). Its function is as follows. PPIases accelerate the folding of proteins. It catalyzes the cis-trans isomerization of proline imidic peptide bonds in oligopeptides. This chain is Peptidyl-prolyl cis-trans isomerase FKBP20-1 (FKBP20-1), found in Arabidopsis thaliana (Mouse-ear cress).